Here is an 874-residue protein sequence, read N- to C-terminus: AP-1 complex subunit gamma-1 (874 aa).

A GAE domain is found at 761–873 (TVAKSHTVYT…QDQTDWAQPS (113 aa)).

The protein belongs to the adaptor complexes large subunit family. Adaptor protein complex 1 (AP-1) is a heterotetramer composed of two large adaptins (gamma-type subunit APL4 and beta-type subunit APL2), a medium adaptin (mu-type subunit APM1) and a small adaptin (sigma-type subunit APS1). AP-1 interacts with clathrin.

It is found in the cytoplasmic vesicle. The protein resides in the clathrin-coated vesicle membrane. It localises to the golgi apparatus. Its function is as follows. Adaptins are components of the adaptor complexes which link clathrin to receptors in coated vesicles. Clathrin-associated protein complexes are believed to interact with the cytoplasmic tails of membrane proteins, leading to their selection and concentration. The AP-1 complex interacts directly with clathrin. Required for apical growth extension. This chain is AP-1 complex subunit gamma-1 (APL4), found in Mycosarcoma maydis (Corn smut fungus).